The primary structure comprises 148 residues: Macrodomain Ter protein (148 aa).

It belongs to the MatP family. As to quaternary structure, homodimer.

Its subcellular location is the cytoplasm. Required for spatial organization of the terminus region of the chromosome (Ter macrodomain) during the cell cycle. Prevents early segregation of duplicated Ter macrodomains during cell division. Binds specifically to matS, which is a 13 bp signature motif repeated within the Ter macrodomain. This chain is Macrodomain Ter protein, found in Photobacterium profundum (strain SS9).